A 214-amino-acid chain; its full sequence is Osteoclast-stimulating factor 1 (214 aa).

The SH3 domain maps to 12–71 (GQVKVFRALFTFDPRTPDELYFEEGDILYISDTSDTNWWKGTCRGRTGLIPSNYVAEQAE). ANK repeat units follow at residues 72-101 (TIDH…GING), 105-135 (AGNT…ELNQ), and 139-168 (LGDT…RTDI).

Ubiquitously expressed.

It is found in the cytoplasm. Induces bone resorption, acting probably through a signaling cascade which results in the secretion of factor(s) enhancing osteoclast formation and activity. This Monopterus albus (Swamp eel) protein is Osteoclast-stimulating factor 1 (ostf1).